We begin with the raw amino-acid sequence, 325 residues long: Beta-ketoacyl-[acyl-carrier-protein] synthase III (325 aa).

Catalysis depends on residues Cys116 and His252. An ACP-binding region spans residues 253–257 (QANLR). Residue Asn282 is part of the active site.

It belongs to the thiolase-like superfamily. FabH family. As to quaternary structure, homodimer.

The protein localises to the cytoplasm. The enzyme catalyses butanoyl-CoA + malonyl-[ACP] + H(+) = 3-oxohexanoyl-[ACP] + CO2 + CoA. It carries out the reaction hexanoyl-CoA + malonyl-[ACP] + H(+) = 3-oxooctanoyl-[ACP] + CO2 + CoA. The catalysed reaction is octanoyl-CoA + malonyl-[ACP] + H(+) = 3-oxodecanoyl-[ACP] + CO2 + CoA. It catalyses the reaction decanoyl-CoA + malonyl-[ACP] + H(+) = 3-oxododecanoyl-[ACP] + CO2 + CoA. The enzyme catalyses 2-methylpropanoyl-CoA + malonyl-[ACP] + H(+) = 4-methyl-3-oxopentanoyl-[ACP] + CO2 + CoA. It carries out the reaction 3-methylbutanoyl-CoA + malonyl-[ACP] + H(+) = 5-methyl-3-oxohexanoyl-[ACP] + CO2 + CoA. The catalysed reaction is malonyl-[ACP] + acetyl-CoA + H(+) = 3-oxobutanoyl-[ACP] + CO2 + CoA. Its pathway is lipid metabolism; fatty acid biosynthesis. Its function is as follows. Catalyzes the condensation reaction of fatty acid synthesis by the addition to an acyl acceptor of two carbons from malonyl-ACP. Catalyzes the first condensation reaction which initiates fatty acid synthesis and may therefore play a role in governing the total rate of fatty acid production. Possesses both acetoacetyl-ACP synthase and acetyl transacylase activities. Can use a wide range of acyl-CoAs as the primer substrate in vitro, with a slight preference for short, medium-straight chain acyl-CoAs. Can also use branched-chain acyl-CoAs and acetyl-CoA. The protein is Beta-ketoacyl-[acyl-carrier-protein] synthase III of Xanthomonas campestris pv. campestris (strain 8004).